Reading from the N-terminus, the 226-residue chain is Phosphoglycolate phosphatase (226 aa).

The active-site Nucleophile is aspartate 9. The Mg(2+) site is built by aspartate 9 and aspartate 11. Residue lysine 150 coordinates substrate. Mg(2+) is bound by residues aspartate 173 and aspartate 177.

This sequence belongs to the archaeal SPP-like hydrolase family. The cofactor is Mg(2+).

The catalysed reaction is 2-phosphoglycolate + H2O = glycolate + phosphate. Its function is as follows. Catalyzes the dephosphorylation of 2-phosphoglycolate. The sequence is that of Phosphoglycolate phosphatase from Methanococcoides burtonii (strain DSM 6242 / NBRC 107633 / OCM 468 / ACE-M).